A 260-amino-acid polypeptide reads, in one-letter code: Indole-3-glycerol phosphate synthase (260 aa).

It belongs to the TrpC family.

It catalyses the reaction 1-(2-carboxyphenylamino)-1-deoxy-D-ribulose 5-phosphate + H(+) = (1S,2R)-1-C-(indol-3-yl)glycerol 3-phosphate + CO2 + H2O. The protein operates within amino-acid biosynthesis; L-tryptophan biosynthesis; L-tryptophan from chorismate: step 4/5. This Acetivibrio thermocellus (strain ATCC 27405 / DSM 1237 / JCM 9322 / NBRC 103400 / NCIMB 10682 / NRRL B-4536 / VPI 7372) (Clostridium thermocellum) protein is Indole-3-glycerol phosphate synthase.